The primary structure comprises 732 residues: MSEQGKCPVTGRTAVNPVTTGGMSNRDWWPNQLHLDMLHQHSSLTNPMGEEFRYKEEFKKLDLKSVKKDLYALMTDSQEWWPADYGHYGGLFIRMAWHSAGTYRTSDGRGGGGTGNQRFAPLNSWPDNANLDKARRLLWPIKQKYGRKLSWADLMILAGNCALESMGFKTFGFGGGRVDIWEPEEDIYWGKEVEWLGSNRYSGERDLENPLAAVQMGLIYVNPEGPDGNPDPVAAGRDIRETFARMAMNDEETVALVAGGHTFGKCHGVGDPKLIGPEPEAAEIEEQGLGWKSGYGSGKGDETMTSGLEGAWTPDPIHWDMGYLGMLFKYEWELTKSPAGAWQWKPKDVAEEDLAPAAHDPSKRVPTMMTTADLAMRMDPLYGPIARRYYEHPEQFADAFARAWFKLTHRDMGPRSRYLGAEVPAEELIWQDPVPAVDHELIGEGKIKELKKRILASGLSIPELLSTAWASASTFRSSDKRGGANGSRIRLSPQKEWEVNQPEQLQRVLGKLEEIRNAFNGEQSGGKQVSLADLIVLGGCAAVEEAARRAGNDVTVPFIPGRTDASQEQTDVESFAVLEPLADGFRNYTKRKYSVTPEEMLIDRSQLLTLTATEMTVLLGGLRVLGVNFRQSPHGLFTNRPETLTNDFFVNLLDMGTEWKPLSKEHETFEGRDRKTGEVRWSATRVDLIFGSNARLRAIAEVYGSDDAQGKFVQDFVAAWNKVMNLDRFDLS.

The segment at residues 97–220 is a cross-link (tryptophyl-tyrosyl-methioninium (Trp-Tyr) (with M-246)); the sequence is WHSAGTYRTS…LAAVQMGLIY (124 aa). Catalysis depends on histidine 98, which acts as the Proton acceptor. Residues 220-246 constitute a cross-link (tryptophyl-tyrosyl-methioninium (Tyr-Met) (with W-97)); it reads YVNPEGPDGNPDPVAAGRDIRETFARM. A heme b-binding site is contributed by histidine 261.

Belongs to the peroxidase family. Peroxidase/catalase subfamily. In terms of assembly, homodimer or homotetramer. The cofactor is heme b. In terms of processing, formation of the three residue Trp-Tyr-Met cross-link is important for the catalase, but not the peroxidase activity of the enzyme.

The catalysed reaction is H2O2 + AH2 = A + 2 H2O. The enzyme catalyses 2 H2O2 = O2 + 2 H2O. Functionally, bifunctional enzyme with both catalase and broad-spectrum peroxidase activity. In Pelodictyon phaeoclathratiforme (strain DSM 5477 / BU-1), this protein is Catalase-peroxidase.